Consider the following 385-residue polypeptide: Galactokinase (385 aa).

A substrate-binding site is contributed by 34-37; the sequence is EHTD. 124–130 contributes to the ATP binding site; it reads SSGLSSS. The Mg(2+) site is built by S130 and E162. The Proton acceptor role is filled by D174. Y223 serves as a coordination point for substrate.

The protein belongs to the GHMP kinase family. GalK subfamily.

The protein localises to the cytoplasm. It catalyses the reaction alpha-D-galactose + ATP = alpha-D-galactose 1-phosphate + ADP + H(+). It participates in carbohydrate metabolism; galactose metabolism. Functionally, catalyzes the transfer of the gamma-phosphate of ATP to D-galactose to form alpha-D-galactose-1-phosphate (Gal-1-P). The polypeptide is Galactokinase (Mannheimia succiniciproducens (strain KCTC 0769BP / MBEL55E)).